A 238-amino-acid chain; its full sequence is Ubiquitin-conjugating enzyme E2 R2 (238 aa).

In terms of domain architecture, UBC core spans 8–174; it reads SSQKALMLEL…IRKQVSATKA (167 aa). Cys93 serves as the catalytic Glycyl thioester intermediate. Residues 98–113 are important for ubiquitin transfer; the sequence is HPPVDDPQSGELPSER. A disordered region spans residues 194–238; sequence TKVPSNDNSSDLLYDDLYDDDIDDEDEEEEDADCYDDDDSGNEES. Acidic residues predominate over residues 206-238; that stretch reads LYDDLYDDDIDDEDEEEEDADCYDDDDSGNEES. Residue Ser233 is modified to Phosphoserine; by CK2.

Belongs to the ubiquitin-conjugating enzyme family. As to quaternary structure, interacts with multiple Cul1-RING E3 ubiquitin-protein ligase complexes, also known as SCF (SKP1-CUL1-F-box protein) complexes, including SCF(FBXW7) and SCF(BTRC). Interacts with multiple Cul2-RING (CRL2) E3 ubiquitin-protein ligase complexes, also known as ECS (Elongin BC-CUL2/5-SOCS-box protein) complexes, including CRL2(FEM1C) and ECS(VHL). When phosphorylated, interacts with beta-TrCP (BTRC).

The catalysed reaction is S-ubiquitinyl-[E1 ubiquitin-activating enzyme]-L-cysteine + [E2 ubiquitin-conjugating enzyme]-L-cysteine = [E1 ubiquitin-activating enzyme]-L-cysteine + S-ubiquitinyl-[E2 ubiquitin-conjugating enzyme]-L-cysteine.. The protein operates within protein modification; protein ubiquitination. Neddylation of CUL2 in the CRL2(FEM1C) E3 ligase complex increases substrate affinity of UBE2R2 and the ubiquitin-transfer rate in the E2-E3 complex. In terms of biological role, E2 ubiquitin-conjugating enzyme that accepts ubiquitin from an E1 ubiquitin-activating protein, and catalyzes its covalent attachment to other proteins by an E3 ubiquitin-protein ligase complex. In vitro catalyzes monoubiquitination and 'Lys-48'-linked polyubiquitination. Works in collaboration with various Cul1-RING and Cul2-RING E3 ligase complexes. May be involved in degradation of katenin. The sequence is that of Ubiquitin-conjugating enzyme E2 R2 (UBE2R2) from Homo sapiens (Human).